The chain runs to 390 residues: Copper-containing nitrite reductase (390 aa).

A signal peptide spans 1–18 (MKRQALAAMIASLFALAA). Cys19 carries the N-palmitoyl cysteine lipid modification. The S-diacylglycerol cysteine moiety is linked to residue Cys19. Residues 30–51 (ETPAAAAEAASSAAQTAAETPS) are disordered. Plastocyanin-like domains lie at 101–195 (WTFD…ILVE) and 245–346 (GHVG…LKVE). Residues His134, His139, His174, Cys175, His183, and Met188 each contribute to the Cu cation site. His139 is a substrate binding site. His280 serves as a coordination point for substrate. His329 contacts Cu cation. The disordered stretch occupies residues 367–390 (GAAPAASAPAASAPAASASEKSVY). The span at 368-390 (AAPAASAPAASAPAASASEKSVY) shows a compositional bias: low complexity. 3 tandem repeats follow at residues 371-375 (AASAP), 376-380 (AASAP), and 381-385 (AASAS). The tract at residues 371-385 (AASAPAASAPAASAS) is 3 X 5 AA tandem repeats of A-A-S-A-P.

Belongs to the multicopper oxidase family. In terms of assembly, homotrimer. The cofactor is Cu(+). It depends on Cu(2+) as a cofactor.

It is found in the cell outer membrane. The catalysed reaction is nitric oxide + Fe(III)-[cytochrome c] + H2O = Fe(II)-[cytochrome c] + nitrite + 2 H(+). In terms of biological role, catalyzes the reduction of nitrite to nitric oxide (NO). It could be essential for growth and survival in oxygen-depleted environments. The protein is Copper-containing nitrite reductase (aniA) of Neisseria meningitidis serogroup B (strain ATCC BAA-335 / MC58).